The primary structure comprises 343 residues: Ribonucleoside-diphosphate reductase small subunit (343 aa).

3 residues coordinate Fe cation: aspartate 101, glutamate 131, and histidine 134. The active site involves tyrosine 138. The chain crosses the membrane as a helical span at residues 188-208; the sequence is ILMILIEGIFFSASFAAIAYL. Residues glutamate 194, glutamate 228, and histidine 231 each coordinate Fe cation.

The protein belongs to the ribonucleoside diphosphate reductase small chain family. Heterotetramer composed of a homodimer of the large subunit (R1) and a homodimer of the small subunit (R2). Larger multisubunit protein complex are also active, composed of (R1)n(R2)n. The cofactor is Fe cation.

Its subcellular location is the host membrane. The catalysed reaction is a 2'-deoxyribonucleoside 5'-diphosphate + [thioredoxin]-disulfide + H2O = a ribonucleoside 5'-diphosphate + [thioredoxin]-dithiol. Functionally, ribonucleoside-diphosphate reductase holoenzyme provides the precursors necessary for viral DNA synthesis. Allows virus growth in non-dividing cells, as well as reactivation from latency in infected hosts. Catalyzes the biosynthesis of deoxyribonucleotides from the corresponding ribonucleotides. The polypeptide is Ribonucleoside-diphosphate reductase small subunit (Gallid herpesvirus 2 (strain Chicken/Md5/ATCC VR-987) (GaHV-2)).